The primary structure comprises 294 residues: Nucleotide-binding protein Daud_0300 (294 aa).

Position 11 to 18 (11 to 18 (GLSGAGKT)) interacts with ATP. Residue 62–65 (DIRG) coordinates GTP.

Belongs to the RapZ-like family.

Functionally, displays ATPase and GTPase activities. The sequence is that of Nucleotide-binding protein Daud_0300 from Desulforudis audaxviator (strain MP104C).